Here is a 166-residue protein sequence, read N- to C-terminus: MWTLALGGIFLAAVEACVFCRFPDRELSGRLARLCSQMEVQWKDCEVSWTFSAFALDDASLNKITEKTHRVLRVMEIKGSLYSLPSYWQWLRKTKLREYNREALCPPSCRGSTILYNCSTCQGFEVYCWPRKRCFPGSHDLWEARILLLFVCGTALLLGVPSLAVE.

The first 16 residues, 1-16, serve as a signal peptide directing secretion; that stretch reads MWTLALGGIFLAAVEA. 4 cysteine pairs are disulfide-bonded: Cys-17/Cys-118, Cys-20/Cys-121, Cys-105/Cys-128, and Cys-109/Cys-134. The Extracellular segment spans residues 17 to 145; it reads CVFCRFPDRE…PGSHDLWEAR (129 aa). An N-linked (GlcNAc...) asparagine glycan is attached at Asn-117. A helical membrane pass occupies residues 146-165; that stretch reads ILLLFVCGTALLLGVPSLAV. Residue Glu-166 is a topological domain, cytoplasmic.

This sequence belongs to the TMEM95 family. Does not interact with sperm-egg fusion proteins IZUMO1 or IZUMO1R/JUNO. In terms of processing, N-glycosylated. As to expression, detected in testis and brain with higher levels in brain than testis.

It is found in the cytoplasmic vesicle. It localises to the secretory vesicle. Its subcellular location is the acrosome membrane. Sperm protein required for fusion of sperm with the egg membrane during fertilization. The protein is Sperm-egg fusion protein TMEM95 of Bos taurus (Bovine).